The following is a 313-amino-acid chain: Transaldolase (313 aa).

K125 functions as the Schiff-base intermediate with substrate in the catalytic mechanism.

It belongs to the transaldolase family. Type 1 subfamily. As to quaternary structure, homodimer.

The protein resides in the cytoplasm. It catalyses the reaction D-sedoheptulose 7-phosphate + D-glyceraldehyde 3-phosphate = D-erythrose 4-phosphate + beta-D-fructose 6-phosphate. It participates in carbohydrate degradation; pentose phosphate pathway; D-glyceraldehyde 3-phosphate and beta-D-fructose 6-phosphate from D-ribose 5-phosphate and D-xylulose 5-phosphate (non-oxidative stage): step 2/3. Functionally, transaldolase is important for the balance of metabolites in the pentose-phosphate pathway. The polypeptide is Transaldolase (Pseudomonas syringae pv. syringae (strain B728a)).